Here is a 219-residue protein sequence, read N- to C-terminus: Small ribosomal subunit protein uS3 (219 aa).

The region spanning 39–107 (LRKFLKKKLH…EVLIDIQEVR (69 aa)) is the KH type-2 domain.

The protein belongs to the universal ribosomal protein uS3 family. As to quaternary structure, part of the 30S ribosomal subunit. Forms a tight complex with proteins S10 and S14.

Its function is as follows. Binds the lower part of the 30S subunit head. Binds mRNA in the 70S ribosome, positioning it for translation. This Desulfatibacillum aliphaticivorans protein is Small ribosomal subunit protein uS3.